A 539-amino-acid chain; its full sequence is Membrane protein insertase YidC (539 aa).

A helical transmembrane segment spans residues 7-27 (IIAIALSFVVLVGWSYLADHM). A disordered region spans residues 32 to 64 (QPAPQAQQEETAPSASQAAPQSASQAAAPAPRA). Transmembrane regions (helical) follow at residues 347–367 (YVGNYGVAIILLTVVIKLVFW), 418–438 (GGCLPMLVQIPVFFGLYQALL), and 498–518 (IMMFMPVVFTFMFLSFPSGLV).

It belongs to the OXA1/ALB3/YidC family. Type 1 subfamily. As to quaternary structure, interacts with the Sec translocase complex via SecD. Specifically interacts with transmembrane segments of nascent integral membrane proteins during membrane integration.

The protein resides in the cell inner membrane. Its function is as follows. Required for the insertion and/or proper folding and/or complex formation of integral membrane proteins into the membrane. Involved in integration of membrane proteins that insert both dependently and independently of the Sec translocase complex, as well as at least some lipoproteins. Aids folding of multispanning membrane proteins. In Nitratidesulfovibrio vulgaris (strain DSM 19637 / Miyazaki F) (Desulfovibrio vulgaris), this protein is Membrane protein insertase YidC.